Reading from the N-terminus, the 274-residue chain is NH(3)-dependent NAD(+) synthetase (274 aa).

27–34 (GLSGGIDS) contributes to the ATP binding site. Mg(2+) is bound at residue D33. Position 121 (R121) interacts with deamido-NAD(+). Residue T141 participates in ATP binding. Position 146 (E146) interacts with Mg(2+). ATP-binding residues include K170 and S192.

It belongs to the NAD synthetase family. Homodimer.

The catalysed reaction is deamido-NAD(+) + NH4(+) + ATP = AMP + diphosphate + NAD(+) + H(+). Its pathway is cofactor biosynthesis; NAD(+) biosynthesis; NAD(+) from deamido-NAD(+) (ammonia route): step 1/1. Functionally, catalyzes the ATP-dependent amidation of deamido-NAD to form NAD. Uses ammonia as a nitrogen source. This Helicobacter hepaticus (strain ATCC 51449 / 3B1) protein is NH(3)-dependent NAD(+) synthetase.